A 639-amino-acid polypeptide reads, in one-letter code: Threonine--tRNA ligase (639 aa).

One can recognise a TGS domain in the interval 1–61 (MIRITLPDNS…DHDARLQIIT (61 aa)). The interval 242–533 (DHRRLGRELD…LIEQHAGALP (292 aa)) is catalytic. C333, H384, and H510 together coordinate Zn(2+).

Belongs to the class-II aminoacyl-tRNA synthetase family. Homodimer. The cofactor is Zn(2+).

The protein resides in the cytoplasm. It catalyses the reaction tRNA(Thr) + L-threonine + ATP = L-threonyl-tRNA(Thr) + AMP + diphosphate + H(+). In terms of biological role, catalyzes the attachment of threonine to tRNA(Thr) in a two-step reaction: L-threonine is first activated by ATP to form Thr-AMP and then transferred to the acceptor end of tRNA(Thr). Also edits incorrectly charged L-seryl-tRNA(Thr). The protein is Threonine--tRNA ligase of Paracidovorax citrulli (strain AAC00-1) (Acidovorax citrulli).